The sequence spans 344 residues: Heat-inducible transcription repressor HrcA (344 aa).

The protein belongs to the HrcA family.

Its function is as follows. Negative regulator of class I heat shock genes (grpE-dnaK-dnaJ and groELS operons). Prevents heat-shock induction of these operons. The chain is Heat-inducible transcription repressor HrcA from Geobacillus stearothermophilus (Bacillus stearothermophilus).